The following is a 233-amino-acid chain: Esterase FUS5 (233 aa).

Residues serine 105, aspartate 159, and histidine 187 each act as charge relay system in the active site.

It belongs to the LovG family.

Its function is as follows. Esterase; part of the gene cluster that mediates the biosynthesis of the mycotoxin fusarin C. Within the cluster, FUS1, FUS2, FUS8 and FUS9 are sufficient for fusarin production. The other FUS cluster members are not essential for fusarin C biosynthesis. This is Esterase FUS5 from Gibberella fujikuroi (strain CBS 195.34 / IMI 58289 / NRRL A-6831) (Bakanae and foot rot disease fungus).